The sequence spans 96 residues: Muconolactone Delta-isomerase (96 aa).

The protein belongs to the muconolactone Delta-isomerase family. Homodecamer.

The catalysed reaction is (S)-muconolactone = (4,5-dihydro-5-oxofuran-2-yl)-acetate. The protein operates within aromatic compound metabolism; beta-ketoadipate pathway; 5-oxo-4,5-dihydro-2-furylacetate from catechol: step 3/3. This is Muconolactone Delta-isomerase (catC) from Pseudomonas putida (Arthrobacter siderocapsulatus).